A 137-amino-acid chain; its full sequence is Protein PsiE homolog (137 aa).

A run of 4 helical transmembrane segments spans residues 13–35, 55–77, 84–103, and 107–129; these read ILLR…AFLI, YYMT…IVKY, FPLR…FIIV, and SATS…FLAN.

Belongs to the PsiE family.

The protein resides in the cell membrane. This chain is Protein PsiE homolog, found in Listeria monocytogenes serotype 4b (strain F2365).